Here is a 310-residue protein sequence, read N- to C-terminus: Prostate androgen-regulated mucin-like protein 1 homolog (310 aa).

Positions Met-1–Ser-20 are cleaved as a signal peptide. Residues Leu-21–Ser-258 are Extracellular-facing. The segment covering Thr-40–Thr-74 has biased composition (polar residues). The disordered stretch occupies residues Thr-40–Thr-224. N-linked (GlcNAc...) asparagine glycosylation is found at Asn-58, Asn-62, and Asn-80. Residues Ser-92–Asp-103 are compositionally biased toward polar residues. The span at Ser-150–His-209 shows a compositional bias: low complexity. N-linked (GlcNAc...) asparagine glycosylation is present at Asn-176. A helical transmembrane segment spans residues Ile-259–Tyr-279. The Cytoplasmic portion of the chain corresponds to Leu-280–Ser-310. Ser-298 is modified (phosphoserine).

It belongs to the PARM family. Highly N-glycosylated and O-glycosylated.

It localises to the cell membrane. The protein localises to the golgi apparatus membrane. It is found in the endosome membrane. Its function is as follows. May regulate TLP1 expression and telomerase activity, thus enabling certain prostatic cells to resist apoptosis. This Pongo abelii (Sumatran orangutan) protein is Prostate androgen-regulated mucin-like protein 1 homolog (PARM1).